The following is a 116-amino-acid chain: Putative UPF0320 protein YLL065W (116 aa).

This sequence belongs to the UPF0320 family.

The protein is Putative UPF0320 protein YLL065W of Saccharomyces cerevisiae (strain ATCC 204508 / S288c) (Baker's yeast).